Here is a 326-residue protein sequence, read N- to C-terminus: tRNA U34 carboxymethyltransferase (326 aa).

Residues K91, W105, K110, G130, M196, Y200, and R315 each contribute to the carboxy-S-adenosyl-L-methionine site.

The protein belongs to the class I-like SAM-binding methyltransferase superfamily. CmoB family. As to quaternary structure, homotetramer.

It catalyses the reaction carboxy-S-adenosyl-L-methionine + 5-hydroxyuridine(34) in tRNA = 5-carboxymethoxyuridine(34) in tRNA + S-adenosyl-L-homocysteine + H(+). Its function is as follows. Catalyzes carboxymethyl transfer from carboxy-S-adenosyl-L-methionine (Cx-SAM) to 5-hydroxyuridine (ho5U) to form 5-carboxymethoxyuridine (cmo5U) at position 34 in tRNAs. The polypeptide is tRNA U34 carboxymethyltransferase (Tolumonas auensis (strain DSM 9187 / NBRC 110442 / TA 4)).